The sequence spans 436 residues: UPF0597 protein YhaM (436 aa).

The protein belongs to the UPF0597 family.

This Salmonella choleraesuis (strain SC-B67) protein is UPF0597 protein YhaM.